The following is a 156-amino-acid chain: Small ribosomal subunit protein uS7 (156 aa).

It belongs to the universal ribosomal protein uS7 family. Part of the 30S ribosomal subunit. Contacts proteins S9 and S11.

Its function is as follows. One of the primary rRNA binding proteins, it binds directly to 16S rRNA where it nucleates assembly of the head domain of the 30S subunit. Is located at the subunit interface close to the decoding center, probably blocks exit of the E-site tRNA. The sequence is that of Small ribosomal subunit protein uS7 from Staphylococcus saprophyticus subsp. saprophyticus (strain ATCC 15305 / DSM 20229 / NCIMB 8711 / NCTC 7292 / S-41).